We begin with the raw amino-acid sequence, 67 residues long: Large ribosomal subunit protein bL35 (67 aa).

The segment covering 1–32 (MPKLKNHSGAKKRFAKTATGKYKRRKAGRKHL) has biased composition (basic residues). The tract at residues 1–54 (MPKLKNHSGAKKRFAKTATGKYKRRKAGRKHLLTPQSGSRKREMRQTGIIKPES) is disordered.

Belongs to the bacterial ribosomal protein bL35 family.

The chain is Large ribosomal subunit protein bL35 from Elusimicrobium minutum (strain Pei191).